Reading from the N-terminus, the 195-residue chain is Glycerol-3-phosphate acyltransferase 1 (195 aa).

5 consecutive transmembrane segments (helical) span residues 6-26 (VILT…GHFL), 52-72 (LGIA…FLVV), 74-94 (LGLK…AVAG), 117-137 (LAVY…LTFL), and 168-188 (FGLG…ISLF).

It belongs to the PlsY family. As to quaternary structure, probably interacts with PlsX.

Its subcellular location is the cell membrane. The catalysed reaction is an acyl phosphate + sn-glycerol 3-phosphate = a 1-acyl-sn-glycero-3-phosphate + phosphate. Its pathway is lipid metabolism; phospholipid metabolism. Its function is as follows. Catalyzes the transfer of an acyl group from acyl-phosphate (acyl-PO(4)) to glycerol-3-phosphate (G3P) to form lysophosphatidic acid (LPA). This enzyme utilizes acyl-phosphate as fatty acyl donor, but not acyl-CoA or acyl-ACP. The protein is Glycerol-3-phosphate acyltransferase 1 of Moorella thermoacetica (strain ATCC 39073 / JCM 9320).